The sequence spans 497 residues: Di-/tripeptide transporter (497 aa).

12 helical membrane-spanning segments follow: residues 3 to 23 (AILLFYMYYAVTKGGLGMSQT), 26 to 46 (ASIMSIYGSLVYLSTLVGGWL), 57 to 77 (VFYGGVLIMLGHIVLALPAGV), 84 to 104 (IALIVVGTGLLKPNVSDMVGG), 119 to 139 (IFVFGINLGSIIAPWLVPWAA), 155 to 175 (AGFSLAAVGMFFGLVQYVLGG), 199 to 219 (IKWVVIIIIAIVAILAAMAGV), 227 to 247 (VITLLTILAIALPIYYFVMMF), 294 to 314 (FIILIALIIMASILIPNKVII), 321 to 341 (LVLLVFYWIGLNLIPFSTFVL), 372 to 392 (GIEIPLFLRQLIINIFTLIIL), and 452 to 472 (IVIIIFYLVKMAALWWAWSYI).

It belongs to the major facilitator superfamily. Proton-dependent oligopeptide transporter (POT/PTR) (TC 2.A.17) family.

It is found in the cell membrane. Its function is as follows. Proton-dependent uptake of di- or tri-peptides. This Lactobacillus helveticus (Lactobacillus suntoryeus) protein is Di-/tripeptide transporter (dtpT).